The primary structure comprises 206 residues: MVKPSLEFALNEPNRYYDRHFERSAVKILPGEYFATRENTMIVTVLGSCVAVCLYDPVLKIGGMNHFLLPNDNVTAPNMMTESARYGVFAMELLINHVLKLGARRNALEAKVFGGGNVLRGLTVQNIGERNAEFVLDYLQMEQIPVIAADLLDIYPRKVYFFPETGLVKVRKIKTIHNSTIMDRESEYRLRIKNLPSGGDVELFGE.

It belongs to the CheD family.

It carries out the reaction L-glutaminyl-[protein] + H2O = L-glutamyl-[protein] + NH4(+). Probably deamidates glutamine residues to glutamate on methyl-accepting chemotaxis receptors (MCPs), playing an important role in chemotaxis. The sequence is that of Probable chemoreceptor glutamine deamidase CheD 1 from Shewanella oneidensis (strain ATCC 700550 / JCM 31522 / CIP 106686 / LMG 19005 / NCIMB 14063 / MR-1).